Here is a 480-residue protein sequence, read N- to C-terminus: Glutarate-semialdehyde dehydrogenase (480 aa).

NADP(+) contacts are provided by residues 156-157 (WN), 180-183 (KPAS), and 233-234 (GS). Catalysis depends on E255, which acts as the Proton acceptor. An NADP(+)-binding site is contributed by L256. The active-site Nucleophile is the C289. E384 is a binding site for NADP(+).

Belongs to the aldehyde dehydrogenase family.

The catalysed reaction is 5-oxopentanoate + NADP(+) + H2O = glutarate + NADPH + 2 H(+). It functions in the pathway amino-acid degradation. Catalyzes the conversion of 5-oxopentanoate (glutarate semialdehyde) to glutarate. Involved in L-lysine degradation. This is Glutarate-semialdehyde dehydrogenase from Pseudomonas putida (strain ATCC 47054 / DSM 6125 / CFBP 8728 / NCIMB 11950 / KT2440).